A 186-amino-acid chain; its full sequence is Lipid A acyltransferase PagP (186 aa).

The first 19 residues, 1–19, serve as a signal peptide directing secretion; that stretch reads MKRLISCLTIICALNRSAA. Catalysis depends on residues His-60, Asp-103, and Ser-104.

The protein belongs to the lipid A palmitoyltransferase family. In terms of assembly, homodimer.

Its subcellular location is the cell outer membrane. The enzyme catalyses a lipid A + a 1,2-diacyl-sn-glycero-3-phosphocholine = a hepta-acyl lipid A + a 2-acyl-sn-glycero-3-phosphocholine. The catalysed reaction is a lipid IVA + a 1,2-diacyl-sn-glycero-3-phosphocholine = a lipid IVB + a 2-acyl-sn-glycero-3-phosphocholine. It catalyses the reaction a lipid IIA + a 1,2-diacyl-sn-glycero-3-phosphocholine = a lipid IIB + a 2-acyl-sn-glycero-3-phosphocholine. Its function is as follows. Transfers a fatty acid residue from the sn-1 position of a phospholipid to the N-linked hydroxyfatty acid chain on the proximal unit of lipid A or its precursors. Confers resistance to cationic antimicrobial peptides (CAMPs). Promotes the ability of L.pneumophila to replicate and/or survive in macrophages. Important for ability to kill macrophages and to promote the virulence. In Legionella pneumophila, this protein is Lipid A acyltransferase PagP.